Reading from the N-terminus, the 460-residue chain is 25S rRNA (cytosine-C(5))-methyltransferase rcm1 (460 aa).

Residues 223 to 229, Glu-246, Asp-273, and Asp-293 each bind S-adenosyl-L-methionine; that span reads CAAPGNK. Cys-350 functions as the Nucleophile in the catalytic mechanism. Basic and acidic residues predominate over residues 430–439; it reads KMYKNDDDTK. The disordered stretch occupies residues 430 to 460; sequence KMYKNDDDTKKRKRKKKKKEVKKKARIQGEE. Positions 440-460 are enriched in basic residues; that stretch reads KRKRKKKKKEVKKKARIQGEE.

Belongs to the class I-like SAM-binding methyltransferase superfamily. RsmB/NOP family. In terms of assembly, interacts with trm112.

The protein localises to the nucleus. Its subcellular location is the nucleolus. The catalysed reaction is a cytidine in 25S rRNA + S-adenosyl-L-methionine = a 5-methylcytidine in 25S rRNA + S-adenosyl-L-homocysteine + H(+). Its function is as follows. S-adenosyl-L-methionine-dependent methyltransferase that specifically methylates the C(5) position of a cytosine in 25S rRNA. The polypeptide is 25S rRNA (cytosine-C(5))-methyltransferase rcm1 (rcm1) (Schizosaccharomyces pombe (strain 972 / ATCC 24843) (Fission yeast)).